The primary structure comprises 411 residues: Creatinase (411 aa).

The active site involves H240.

The protein belongs to the peptidase M24 family. Creatinase subfamily. As to quaternary structure, homodimer.

The catalysed reaction is creatine + H2O = sarcosine + urea. This Bacillus sp. (strain B-0618) protein is Creatinase.